A 156-amino-acid polypeptide reads, in one-letter code: Small ribosomal subunit protein uS7 (156 aa).

This sequence belongs to the universal ribosomal protein uS7 family. In terms of assembly, part of the 30S ribosomal subunit. Contacts proteins S9 and S11.

Functionally, one of the primary rRNA binding proteins, it binds directly to 16S rRNA where it nucleates assembly of the head domain of the 30S subunit. Is located at the subunit interface close to the decoding center, probably blocks exit of the E-site tRNA. This Mycobacterium ulcerans (strain Agy99) protein is Small ribosomal subunit protein uS7.